A 464-amino-acid polypeptide reads, in one-letter code: Trigger factor (464 aa).

In terms of domain architecture, PPIase FKBP-type spans 166–245 (GDFLTIDITA…VKAVKERELP (80 aa)). Residues 426-464 (FVRPGGEEEAPAAEVTEADTAEGEATEVPAEDEKAEAKA) are disordered. The segment covering 432-455 (EEEAPAAEVTEADTAEGEATEVPA) has biased composition (acidic residues).

This sequence belongs to the FKBP-type PPIase family. Tig subfamily.

It localises to the cytoplasm. It catalyses the reaction [protein]-peptidylproline (omega=180) = [protein]-peptidylproline (omega=0). Its function is as follows. Involved in protein export. Acts as a chaperone by maintaining the newly synthesized protein in an open conformation. Functions as a peptidyl-prolyl cis-trans isomerase. The chain is Trigger factor from Pseudarthrobacter chlorophenolicus (strain ATCC 700700 / DSM 12829 / CIP 107037 / JCM 12360 / KCTC 9906 / NCIMB 13794 / A6) (Arthrobacter chlorophenolicus).